Reading from the N-terminus, the 352-residue chain is MSIQTDDFSEQRIIAATPASANEEAIERALRPKQLDEYVGQEKIRGQLEIFITAARQRHEALDHTLLFGPPGLGKTTLAHIIAREMGVNLRQTSGPVLERAGDLAALLTNLEANDVLFIDEIHRLSPVVEEILYPALEDYQIDIMIGEGPAARSVRLDLQPFTLVGATTRAGMLTNPLRDRFGIVARLEFYTPLELTKIVTRSSALLNAPIDEDGAFEIAKRSRGTPRIANRLLRRVRDYAEVKGNGKITKAMADAALVMLDVDPVGFDLMDRKLLEAVLFKFNGGPVGLDNLAAAIGEERDTIEDVLEPYLIQQGFLQRTPRGRIATPVAYAHFGVTAPQTGPNGDLWAGQ.

Residues 5 to 191 (TDDFSEQRII…FGIVARLEFY (187 aa)) are large ATPase domain (RuvB-L). ATP-binding positions include leucine 30, arginine 31, glycine 72, lysine 75, threonine 76, threonine 77, 138-140 (EDY), arginine 181, tyrosine 191, and arginine 228. Threonine 76 lines the Mg(2+) pocket. The segment at 192-262 (TPLELTKIVT…MADAALVMLD (71 aa)) is small ATPAse domain (RuvB-S). The interval 265-352 (PVGFDLMDRK…GPNGDLWAGQ (88 aa)) is head domain (RuvB-H). The DNA site is built by arginine 301, arginine 320, and arginine 325.

Belongs to the RuvB family. As to quaternary structure, homohexamer. Forms an RuvA(8)-RuvB(12)-Holliday junction (HJ) complex. HJ DNA is sandwiched between 2 RuvA tetramers; dsDNA enters through RuvA and exits via RuvB. An RuvB hexamer assembles on each DNA strand where it exits the tetramer. Each RuvB hexamer is contacted by two RuvA subunits (via domain III) on 2 adjacent RuvB subunits; this complex drives branch migration. In the full resolvosome a probable DNA-RuvA(4)-RuvB(12)-RuvC(2) complex forms which resolves the HJ.

It is found in the cytoplasm. The enzyme catalyses ATP + H2O = ADP + phosphate + H(+). Functionally, the RuvA-RuvB-RuvC complex processes Holliday junction (HJ) DNA during genetic recombination and DNA repair, while the RuvA-RuvB complex plays an important role in the rescue of blocked DNA replication forks via replication fork reversal (RFR). RuvA specifically binds to HJ cruciform DNA, conferring on it an open structure. The RuvB hexamer acts as an ATP-dependent pump, pulling dsDNA into and through the RuvAB complex. RuvB forms 2 homohexamers on either side of HJ DNA bound by 1 or 2 RuvA tetramers; 4 subunits per hexamer contact DNA at a time. Coordinated motions by a converter formed by DNA-disengaged RuvB subunits stimulates ATP hydrolysis and nucleotide exchange. Immobilization of the converter enables RuvB to convert the ATP-contained energy into a lever motion, pulling 2 nucleotides of DNA out of the RuvA tetramer per ATP hydrolyzed, thus driving DNA branch migration. The RuvB motors rotate together with the DNA substrate, which together with the progressing nucleotide cycle form the mechanistic basis for DNA recombination by continuous HJ branch migration. Branch migration allows RuvC to scan DNA until it finds its consensus sequence, where it cleaves and resolves cruciform DNA. The sequence is that of Holliday junction branch migration complex subunit RuvB from Janthinobacterium sp. (strain Marseille) (Minibacterium massiliensis).